The primary structure comprises 352 residues: Protein-glutamate methylesterase/protein-glutamine glutaminase 2 (352 aa).

The region spanning 1-116 (MVVDDSAVVR…KQFLTDSADE (116 aa)) is the Response regulatory domain. Asp-50 is subject to 4-aspartylphosphate. Residues 162–352 (AQTTERIVAI…MAREIVTQLQ (191 aa)) enclose the CheB-type methylesterase domain. Catalysis depends on residues Ser-174, His-200, and Asp-296.

This sequence belongs to the CheB family. Post-translationally, phosphorylated by CheA. Phosphorylation of the N-terminal regulatory domain activates the methylesterase activity.

It localises to the cytoplasm. It catalyses the reaction [protein]-L-glutamate 5-O-methyl ester + H2O = L-glutamyl-[protein] + methanol + H(+). The catalysed reaction is L-glutaminyl-[protein] + H2O = L-glutamyl-[protein] + NH4(+). Functionally, involved in chemotaxis. Part of a chemotaxis signal transduction system that modulates chemotaxis in response to various stimuli. Catalyzes the demethylation of specific methylglutamate residues introduced into the chemoreceptors (methyl-accepting chemotaxis proteins or MCP) by CheR. Also mediates the irreversible deamidation of specific glutamine residues to glutamic acid. The sequence is that of Protein-glutamate methylesterase/protein-glutamine glutaminase 2 from Xanthomonas euvesicatoria pv. vesicatoria (strain 85-10) (Xanthomonas campestris pv. vesicatoria).